Here is a 303-residue protein sequence, read N- to C-terminus: Cysteine synthase B (303 aa).

The residue at position 41 (lysine 41) is an N6-(pyridoxal phosphate)lysine. Pyridoxal 5'-phosphate is bound by residues asparagine 71, 174 to 178 (GTTGT), and serine 255.

This sequence belongs to the cysteine synthase/cystathionine beta-synthase family. As to quaternary structure, homodimer. The cofactor is pyridoxal 5'-phosphate.

The enzyme catalyses O-acetyl-L-serine + hydrogen sulfide = L-cysteine + acetate. It participates in amino-acid biosynthesis; L-cysteine biosynthesis; L-cysteine from L-serine: step 2/2. Two cysteine synthase enzymes are found. Both catalyze the same reaction. Cysteine synthase B can also use thiosulfate in place of sulfide to give cysteine thiosulfonate as a product. The sequence is that of Cysteine synthase B (cysM) from Escherichia coli (strain K12).